We begin with the raw amino-acid sequence, 254 residues long: UPF0246 protein FTF1693c (254 aa).

This sequence belongs to the UPF0246 family.

This Francisella tularensis subsp. tularensis (strain FSC 198) protein is UPF0246 protein FTF1693c.